Consider the following 217-residue polypeptide: MRIFSETEIRIIGCLIEKEITTPEQYPLTLNALTTACNQKSNRDPVTSLTDSDVLDSVNTLIQERIITDETRGNSRVAKYQHRFCNTEFGSLKLSKQELAVLCVLFLRGPQTPGELRTRTQRLCEFDNVAQVENVLNGLSADEHSPKVIKLAKEPGKREARFAHLFCGEVSQAIATVQQAPSESHDNERIVALESDVADLKLEVEELKKLINNLLDK.

Belongs to the UPF0502 family.

The protein is UPF0502 protein VF_A0604 of Aliivibrio fischeri (strain ATCC 700601 / ES114) (Vibrio fischeri).